The primary structure comprises 119 residues: MNNEICEITCIHEDKVNRAKSKLANFDTPSVSGFFKILSDENRLKIVHALVHEDELCVCDIANIIDASVATTSHHLNSLKKLGVVDSHKDGKLVYYFIKNIKILNLMELGVNFKEEVLA.

The Cd(2+) site is built by Cys-6, Cys-10, Cys-57, and Cys-59. Positions 23–118 constitute an HTH arsR-type domain; that stretch reads LANFDTPSVS…LGVNFKEEVL (96 aa). The segment at residues 58-77 is a DNA-binding region (H-T-H motif); that stretch reads VCDIANIIDASVATTSHHLN.

As to quaternary structure, homodimer.

Metal-binding repressor for the cad operon. Involved in resistance to heavy metals, such as cadmium, bismuth, zinc or lead. Metal binding causes the repressor to dissociate from the DNA. The polypeptide is Cadmium resistance transcriptional regulatory protein CadC (cadC) (Lactococcus lactis subsp. lactis (Streptococcus lactis)).